The chain runs to 357 residues: Uroporphyrinogen decarboxylase (357 aa).

Residues 27–31 (RQAGR), D77, Y154, S209, and H330 contribute to the substrate site.

This sequence belongs to the uroporphyrinogen decarboxylase family. Homodimer.

It is found in the cytoplasm. It catalyses the reaction uroporphyrinogen III + 4 H(+) = coproporphyrinogen III + 4 CO2. Its pathway is porphyrin-containing compound metabolism; protoporphyrin-IX biosynthesis; coproporphyrinogen-III from 5-aminolevulinate: step 4/4. In terms of biological role, catalyzes the decarboxylation of four acetate groups of uroporphyrinogen-III to yield coproporphyrinogen-III. This is Uroporphyrinogen decarboxylase from Acinetobacter baumannii (strain SDF).